Reading from the N-terminus, the 224-residue chain is Ribose-5-phosphate isomerase A (224 aa).

Substrate contacts are provided by residues 32–35 (TGST), 85–88 (DGAD), and 98–101 (KGGG). Residue glutamate 107 is the Proton acceptor of the active site. A substrate-binding site is contributed by lysine 125.

Belongs to the ribose 5-phosphate isomerase family. Homodimer.

The enzyme catalyses aldehydo-D-ribose 5-phosphate = D-ribulose 5-phosphate. Its pathway is carbohydrate degradation; pentose phosphate pathway; D-ribose 5-phosphate from D-ribulose 5-phosphate (non-oxidative stage): step 1/1. Catalyzes the reversible conversion of ribose-5-phosphate to ribulose 5-phosphate. The sequence is that of Ribose-5-phosphate isomerase A from Pseudomonas putida (strain W619).